We begin with the raw amino-acid sequence, 413 residues long: 4-hydroxy-3-methylbut-2-en-1-yl diphosphate synthase (flavodoxin) (413 aa).

[4Fe-4S] cluster contacts are provided by C298, C301, C344, and E351.

The protein belongs to the IspG family. It depends on [4Fe-4S] cluster as a cofactor.

The catalysed reaction is (2E)-4-hydroxy-3-methylbut-2-enyl diphosphate + oxidized [flavodoxin] + H2O + 2 H(+) = 2-C-methyl-D-erythritol 2,4-cyclic diphosphate + reduced [flavodoxin]. Its pathway is isoprenoid biosynthesis; isopentenyl diphosphate biosynthesis via DXP pathway; isopentenyl diphosphate from 1-deoxy-D-xylulose 5-phosphate: step 5/6. In terms of biological role, converts 2C-methyl-D-erythritol 2,4-cyclodiphosphate (ME-2,4cPP) into 1-hydroxy-2-methyl-2-(E)-butenyl 4-diphosphate. This Koribacter versatilis (strain Ellin345) protein is 4-hydroxy-3-methylbut-2-en-1-yl diphosphate synthase (flavodoxin).